The sequence spans 215 residues: 3-isopropylmalate dehydratase small subunit (215 aa).

This sequence belongs to the LeuD family. LeuD type 1 subfamily. As to quaternary structure, heterodimer of LeuC and LeuD.

It catalyses the reaction (2R,3S)-3-isopropylmalate = (2S)-2-isopropylmalate. The protein operates within amino-acid biosynthesis; L-leucine biosynthesis; L-leucine from 3-methyl-2-oxobutanoate: step 2/4. Functionally, catalyzes the isomerization between 2-isopropylmalate and 3-isopropylmalate, via the formation of 2-isopropylmaleate. This is 3-isopropylmalate dehydratase small subunit from Cellvibrio japonicus (strain Ueda107) (Pseudomonas fluorescens subsp. cellulosa).